The following is a 470-amino-acid chain: Protein naked cuticle homolog 1 (470 aa).

Disordered stretches follow at residues 1–21 and 90–114; these read MGKL…PEGD and PPEK…PCPG. Residue Gly-2 is the site of N-myristoyl glycine attachment. Over residues 92–109 the composition is skewed to basic and acidic residues; it reads EKTDGLGSGDEKKMERVS. The segment at 125–190 is interaction with DVL1, DVL2 and DVL3; sequence QCDVSMEEDS…LRVKLTVAPD (66 aa). The region spanning 131–166 is the EF-hand domain; that stretch reads EEDSRQEWTFTLYDFDNNGKVTREDITSLLHTIYEV. Positions 144, 146, 148, 150, and 155 each coordinate Ca(2+). A compositionally biased stretch (polar residues) spans 192–205; the sequence is SQSKRSVLVNQADL. Disordered regions lie at residues 192–228, 271–314, 337–357, and 446–470; these read SQSK…KKQR, QFGP…QGVD, GTQD…KSVG, and GQPV…FYQT. Residues 210–227 are compositionally biased toward basic and acidic residues; it reads PRAETKPTEDLRSWEKKQ. The span at 271–281 shows a compositional bias: polar residues; sequence QFGPGSPSVAQ. Over residues 452–470 the composition is skewed to basic residues; the sequence is HEHHHHHEHHHHYHHFYQT.

This sequence belongs to the NKD family. Interacts with DVL1, DVL2, DVL3 and PPP2R3A. As to expression, expressed in colon, heart, kidney, leukocyte, liver, lung, ovary, pancreas, placenta, prostate, skeletal muscle, small intestine and spleen.

Its subcellular location is the cell membrane. The protein localises to the cytoplasm. Cell autonomous antagonist of the canonical Wnt signaling pathway. May activate a second Wnt signaling pathway that controls planar cell polarity. This chain is Protein naked cuticle homolog 1 (NKD1), found in Homo sapiens (Human).